We begin with the raw amino-acid sequence, 247 residues long: Ras-like protein family member 11B (247 aa).

Positions 28–245 (AGRRLVKIAV…ALSAKVRTVT (218 aa)) are small GTPase-like. Residues 39–46 (GASGVGKT), 86–93 (DTPGIQVH), and 151–154 (NKAD) contribute to the GTP site. Residues 202-228 (PKQQPSSTPEKRRTSLIPRPKSPNMQD) are disordered.

The protein belongs to the small GTPase superfamily. Ras family.

It carries out the reaction GTP + H2O = GDP + phosphate + H(+). The protein is Ras-like protein family member 11B of Mus musculus (Mouse).